Here is an 87-residue protein sequence, read N- to C-terminus: DNA-directed RNA polymerase subunit omega (87 aa).

This sequence belongs to the RNA polymerase subunit omega family. As to quaternary structure, the RNAP catalytic core consists of 2 alpha, 1 beta, 1 beta' and 1 omega subunit. When a sigma factor is associated with the core the holoenzyme is formed, which can initiate transcription.

It carries out the reaction RNA(n) + a ribonucleoside 5'-triphosphate = RNA(n+1) + diphosphate. Its function is as follows. Promotes RNA polymerase assembly. Latches the N- and C-terminal regions of the beta' subunit thereby facilitating its interaction with the beta and alpha subunits. This chain is DNA-directed RNA polymerase subunit omega, found in Pseudomonas putida (strain ATCC 700007 / DSM 6899 / JCM 31910 / BCRC 17059 / LMG 24140 / F1).